The following is a 565-amino-acid chain: MKQQKPKISFIAAMLIVIGSSIGAGIFFKSSTVLENSQASLVLAIFNWLVASVAVIAMALALIEIASVRNDNLSIISWVKVFNRRWLYHGCKNFMTYLYLPLTFFFMPLYFICSIQDGFRGLLGLETGAHFNTSVDWLIWLALALIITTYFLTIPPLYAKVGNIQNMVVSAVKFIPLVFVPIIGFIVAGTGNGELKNVKALVQPPQINGATASFTQLVQAGYGITRFTGIGAGMGSFISIAAIFFAYDGFYVTAGLQSEMREPKKTPWALFLGLLITTLFYLILAVALSINGGLFSGMEESMGKLFNNKRAGQIVFGVVNLMIGIGVLGIINGFALWAPRFVEDLLAQGDLPFWKQVQGRLNPNKPVVGVIYCLVLSLTVQVLFTVIGALAYLPTVADYKNYVNTEIDKLNSMQWLYSFSDLMATWTSLFTFAFIACAIFGAIVNRKTKKITIANPKRYFLPAAWIAVVVNCISVFVTIIEPFINLFLLFGYDETVAHTVLGNDFIELNELVIGRVMLIVVLVFFAIISFLPVYVEDQYHKRKFGSLANYQQYVQQHLAHSTING.

The next 13 membrane-spanning stretches (helical) occupy residues 8–28, 43–63, 95–115, 137–157, 167–187, 227–247, 268–288, 314–334, 367–387, 424–444, 460–480, 482–502, and 516–536; these read ISFIAAMLIVIGSSIGAGIFF, LAIFNWLVASVAVIAMALALI, MTYLYLPLTFFFMPLYFICSI, WLIWLALALIITTYFLTIPPL, MVVSAVKFIPLVFVPIIGFIV, FTGIGAGMGSFISIAAIFFAY, WALFLGLLITTLFYLILAVAL, IVFGVVNLMIGIGVLGIINGF, VVGVIYCLVLSLTVQVLFTVI, ATWTSLFTFAFIACAIFGAIV, FLPAAWIAVVVNCISVFVTII, PFINLFLLFGYDETVAHTVLG, and VMLIVVLVFFAIISFLPVYVE.

This sequence to M.pneumoniae MPN_095 and MPN_096.

It is found in the cell membrane. This is an uncharacterized protein from Mycoplasma pneumoniae (strain ATCC 29342 / M129 / Subtype 1) (Mycoplasmoides pneumoniae).